Consider the following 165-residue polypeptide: Endoribonuclease YbeY (165 aa).

H130, H134, and H140 together coordinate Zn(2+).

This sequence belongs to the endoribonuclease YbeY family. It depends on Zn(2+) as a cofactor.

Its subcellular location is the cytoplasm. Its function is as follows. Single strand-specific metallo-endoribonuclease involved in late-stage 70S ribosome quality control and in maturation of the 3' terminus of the 16S rRNA. The sequence is that of Endoribonuclease YbeY from Streptococcus pyogenes serotype M1.